A 454-amino-acid chain; its full sequence is tRNA(Ile)-lysidine synthase (454 aa).

31-36 is an ATP binding site; the sequence is SGGADS.

It belongs to the tRNA(Ile)-lysidine synthase family.

The protein localises to the cytoplasm. The catalysed reaction is cytidine(34) in tRNA(Ile2) + L-lysine + ATP = lysidine(34) in tRNA(Ile2) + AMP + diphosphate + H(+). Ligates lysine onto the cytidine present at position 34 of the AUA codon-specific tRNA(Ile) that contains the anticodon CAU, in an ATP-dependent manner. Cytidine is converted to lysidine, thus changing the amino acid specificity of the tRNA from methionine to isoleucine. This is tRNA(Ile)-lysidine synthase from Porphyromonas gingivalis (strain ATCC 33277 / DSM 20709 / CIP 103683 / JCM 12257 / NCTC 11834 / 2561).